Consider the following 261-residue polypeptide: 1-(5-phosphoribosyl)-5-[(5-phosphoribosylamino)methylideneamino] imidazole-4-carboxamide isomerase (261 aa).

The Proton acceptor role is filled by D15. The Proton donor role is filled by D136.

It belongs to the HisA/HisF family.

Its subcellular location is the cytoplasm. It catalyses the reaction 1-(5-phospho-beta-D-ribosyl)-5-[(5-phospho-beta-D-ribosylamino)methylideneamino]imidazole-4-carboxamide = 5-[(5-phospho-1-deoxy-D-ribulos-1-ylimino)methylamino]-1-(5-phospho-beta-D-ribosyl)imidazole-4-carboxamide. The protein operates within amino-acid biosynthesis; L-histidine biosynthesis; L-histidine from 5-phospho-alpha-D-ribose 1-diphosphate: step 4/9. The sequence is that of 1-(5-phosphoribosyl)-5-[(5-phosphoribosylamino)methylideneamino] imidazole-4-carboxamide isomerase from Synechococcus sp. (strain JA-3-3Ab) (Cyanobacteria bacterium Yellowstone A-Prime).